Reading from the N-terminus, the 264-residue chain is Thymidylate synthase (264 aa).

R21 provides a ligand contact to dUMP. Residue H51 participates in (6R)-5,10-methylene-5,6,7,8-tetrahydrofolate binding. Residue 126–127 (RR) coordinates dUMP. The active-site Nucleophile is the C146. DUMP is bound by residues 166-169 (RSCD), N177, and 207-209 (HLY). A (6R)-5,10-methylene-5,6,7,8-tetrahydrofolate-binding site is contributed by D169. S263 serves as a coordination point for (6R)-5,10-methylene-5,6,7,8-tetrahydrofolate.

Belongs to the thymidylate synthase family. Bacterial-type ThyA subfamily. As to quaternary structure, homodimer.

Its subcellular location is the cytoplasm. It catalyses the reaction dUMP + (6R)-5,10-methylene-5,6,7,8-tetrahydrofolate = 7,8-dihydrofolate + dTMP. It functions in the pathway pyrimidine metabolism; dTTP biosynthesis. Catalyzes the reductive methylation of 2'-deoxyuridine-5'-monophosphate (dUMP) to 2'-deoxythymidine-5'-monophosphate (dTMP) while utilizing 5,10-methylenetetrahydrofolate (mTHF) as the methyl donor and reductant in the reaction, yielding dihydrofolate (DHF) as a by-product. This enzymatic reaction provides an intracellular de novo source of dTMP, an essential precursor for DNA biosynthesis. The polypeptide is Thymidylate synthase (Buchnera aphidicola subsp. Acyrthosiphon pisum (strain 5A)).